Consider the following 230-residue polypeptide: Pyridoxine/pyridoxamine 5'-phosphate oxidase (230 aa).

Residues 21–24 and Lys87 each bind substrate; that span reads RVEY. FMN contacts are provided by residues 82–87, 97–98, Lys104, and Gln126; these read RSVLCK and YT. The substrate site is built by Tyr144, Arg148, and Ser152. FMN is bound by residues 161–162 and Trp207; that span reads QS. 213–215 provides a ligand contact to substrate; the sequence is RVH. Arg217 is an FMN binding site.

The protein belongs to the pyridoxamine 5'-phosphate oxidase family. In terms of assembly, homodimer. The cofactor is FMN.

It carries out the reaction pyridoxamine 5'-phosphate + O2 + H2O = pyridoxal 5'-phosphate + H2O2 + NH4(+). The enzyme catalyses pyridoxine 5'-phosphate + O2 = pyridoxal 5'-phosphate + H2O2. Its pathway is cofactor metabolism; pyridoxal 5'-phosphate salvage; pyridoxal 5'-phosphate from pyridoxamine 5'-phosphate: step 1/1. The protein operates within cofactor metabolism; pyridoxal 5'-phosphate salvage; pyridoxal 5'-phosphate from pyridoxine 5'-phosphate: step 1/1. In terms of biological role, catalyzes the oxidation of either pyridoxine 5'-phosphate (PNP) or pyridoxamine 5'-phosphate (PMP) into pyridoxal 5'-phosphate (PLP). This Mycolicibacterium smegmatis (strain ATCC 700084 / mc(2)155) (Mycobacterium smegmatis) protein is Pyridoxine/pyridoxamine 5'-phosphate oxidase.